The following is a 401-amino-acid chain: Enolase (401 aa).

Glutamine 154 contributes to the (2R)-2-phosphoglycerate binding site. Glutamate 197 functions as the Proton donor in the catalytic mechanism. Mg(2+)-binding residues include aspartate 233, glutamate 274, and aspartate 301. Lysine 326, arginine 355, serine 356, and lysine 377 together coordinate (2R)-2-phosphoglycerate. Residue lysine 326 is the Proton acceptor of the active site.

It belongs to the enolase family. Requires Mg(2+) as cofactor.

Its subcellular location is the cytoplasm. It localises to the secreted. It is found in the cell surface. It catalyses the reaction (2R)-2-phosphoglycerate = phosphoenolpyruvate + H2O. The protein operates within carbohydrate degradation; glycolysis; pyruvate from D-glyceraldehyde 3-phosphate: step 4/5. Functionally, catalyzes the reversible conversion of 2-phosphoglycerate (2-PG) into phosphoenolpyruvate (PEP). It is essential for the degradation of carbohydrates via glycolysis. In Thermoplasma acidophilum (strain ATCC 25905 / DSM 1728 / JCM 9062 / NBRC 15155 / AMRC-C165), this protein is Enolase.